We begin with the raw amino-acid sequence, 74 residues long: Large ribosomal subunit protein uL14c (74 aa).

The protein belongs to the universal ribosomal protein uL14 family. As to quaternary structure, part of the 50S ribosomal subunit.

The protein localises to the plastid. The protein resides in the chloroplast. In terms of biological role, binds to 23S rRNA. The chain is Large ribosomal subunit protein uL14c (rpl14) from Oenothera ammophila (Evening primerose).